The chain runs to 619 residues: Zinc finger CCCH domain-containing protein 67 (619 aa).

ANK repeat units follow at residues 52 to 81 (EPLTPLMVAAVYGSVGCLDALLSPPYLVDP) and 88 to 120 (SLSTPLHLAAAGGSASAPAAVSRLLAAGADPAL). 2 C3H1-type zinc fingers span residues 213 to 241 (HYSCVPCPEFKKGAGCRRGDMCEYAHGVF) and 249 to 273 (QYRTRLCKDGVGCARRVCFFAHTPD). The disordered stretch occupies residues 308 to 341 (SPGSSSFTPPLSPSAGGGGGGGGGSGGGGAWPQQ). The span at 322–337 (AGGGGGGGGGSGGGGA) shows a compositional bias: gly residues.

The sequence is that of Zinc finger CCCH domain-containing protein 67 from Oryza sativa subsp. japonica (Rice).